Here is a 211-residue protein sequence, read N- to C-terminus: SOSS complex subunit B1 (211 aa).

The segment at residues 22–92 (IVLETGRVTK…TLYTGRGGDL (71 aa)) is a DNA-binding region (OB). The interval 110–211 (EPNPEYSAQQ…GKETRRSSKR (102 aa)) is disordered. The segment covering 115–128 (YSAQQAPNKTVQND) has biased composition (polar residues). Composition is skewed to pro residues over residues 133 to 143 (APQPPTGPPAT) and 165 to 174 (PHPPHTPSHP).

It belongs to the SOSS-B family. SOSS-B1 subfamily. As to quaternary structure, component of the SOSS complex, composed of SOSS-B (SOSS-B1/NABP2 or SOSS-B2/NABP1), SOSS-A/INTS3 and SOSS-C/INIP. SOSS complexes containing SOSS-B1/NABP2 are more abundant than complexes containing SOSS-B2/NABP1. Directly interacts with ATM, SOSS-A/INTS3 and RAD51. Interacts with INTS7. Phosphorylated by ATM in response to DNA damage. Phosphorylation prevents degradation by the proteasome, hence stabilization of the protein and accumulation within cells. In terms of processing, ubiquitinated in a FBXL5-dependent manner, leading to proteasomal degradation.

The protein resides in the nucleus. Its function is as follows. Component of the SOSS complex, a multiprotein complex that functions downstream of the MRN complex to promote DNA repair and G2/M checkpoint. In the SOSS complex, acts as a sensor of single-stranded DNA that binds to single-stranded DNA, in particular to polypyrimidines. The SOSS complex associates with DNA lesions and influences diverse endpoints in the cellular DNA damage response including cell-cycle checkpoint activation, recombinational repair and maintenance of genomic stability. Required for efficient homologous recombination-dependent repair of double-strand breaks (DSBs) and ATM-dependent signaling pathways. The protein is SOSS complex subunit B1 (NABP2) of Bos taurus (Bovine).